The chain runs to 509 residues: Pyruvate kinase (509 aa).

At Ser29 the chain carries Phosphoserine. A substrate-binding site is contributed by Arg56. The K(+) site is built by Asn58 and Ser60. An ATP-binding site is contributed by 58–61; that stretch reads NFSH. Ser63 carries the phosphoserine modification. Asp91 and Thr92 together coordinate K(+). Residues Arg98 and Lys184 each coordinate ATP. Glu249 contacts Mg(2+). Substrate contacts are provided by Gly272 and Asp273. Residue Asp273 participates in Mg(2+) binding. The residue at position 281 (Ser281) is a Phosphoserine. Position 305 (Thr305) interacts with substrate. Ser412 is subject to Phosphoserine.

This sequence belongs to the pyruvate kinase family. Homotetramer. Mg(2+) is required as a cofactor. It depends on K(+) as a cofactor.

It catalyses the reaction pyruvate + ATP = phosphoenolpyruvate + ADP + H(+). The protein operates within carbohydrate degradation; glycolysis; pyruvate from D-glyceraldehyde 3-phosphate: step 5/5. In Schizosaccharomyces pombe (strain 972 / ATCC 24843) (Fission yeast), this protein is Pyruvate kinase (pyk1).